The sequence spans 320 residues: tRNA pseudouridine synthase B (320 aa).

Residue Asp-49 is the Nucleophile of the active site.

It belongs to the pseudouridine synthase TruB family. Type 1 subfamily.

It catalyses the reaction uridine(55) in tRNA = pseudouridine(55) in tRNA. Responsible for synthesis of pseudouridine from uracil-55 in the psi GC loop of transfer RNAs. This is tRNA pseudouridine synthase B from Bartonella tribocorum (strain CIP 105476 / IBS 506).